Here is a 131-residue protein sequence, read N- to C-terminus: NADH-quinone oxidoreductase subunit I 2 (131 aa).

4Fe-4S ferredoxin-type domains lie at 42-71 (LKVSHSKAKCVCCYLCPTVCPAKCITVEAG) and 81-110 (ERYEIDMLRCIFCGYCVEACPVDALKMTGE). Positions 51, 54, 57, 61, 90, 93, 96, and 100 each coordinate [4Fe-4S] cluster.

The protein belongs to the complex I 23 kDa subunit family. NDH-1 is composed of 14 different subunits. Subunits NuoA, H, J, K, L, M, N constitute the membrane sector of the complex. [4Fe-4S] cluster is required as a cofactor.

The protein localises to the cell inner membrane. The enzyme catalyses a quinone + NADH + 5 H(+)(in) = a quinol + NAD(+) + 4 H(+)(out). Functionally, NDH-1 shuttles electrons from NADH, via FMN and iron-sulfur (Fe-S) centers, to quinones in the respiratory chain. The immediate electron acceptor for the enzyme in this species is believed to be ubiquinone. Couples the redox reaction to proton translocation (for every two electrons transferred, four hydrogen ions are translocated across the cytoplasmic membrane), and thus conserves the redox energy in a proton gradient. In Geobacter metallireducens (strain ATCC 53774 / DSM 7210 / GS-15), this protein is NADH-quinone oxidoreductase subunit I 2.